Here is a 68-residue protein sequence, read N- to C-terminus: Small, acid-soluble spore protein I (68 aa).

The protein belongs to the SspI family.

The protein localises to the spore core. The polypeptide is Small, acid-soluble spore protein I (Halalkalibacterium halodurans (strain ATCC BAA-125 / DSM 18197 / FERM 7344 / JCM 9153 / C-125) (Bacillus halodurans)).